The sequence spans 305 residues: Sulfate adenylyltransferase subunit 2 (305 aa).

It belongs to the PAPS reductase family. CysD subfamily. As to quaternary structure, heterodimer composed of CysD, the smaller subunit, and CysN.

The catalysed reaction is sulfate + ATP + H(+) = adenosine 5'-phosphosulfate + diphosphate. The protein operates within sulfur metabolism; hydrogen sulfide biosynthesis; sulfite from sulfate: step 1/3. With CysN forms the ATP sulfurylase (ATPS) that catalyzes the adenylation of sulfate producing adenosine 5'-phosphosulfate (APS) and diphosphate, the first enzymatic step in sulfur assimilation pathway. APS synthesis involves the formation of a high-energy phosphoric-sulfuric acid anhydride bond driven by GTP hydrolysis by CysN coupled to ATP hydrolysis by CysD. This Pseudomonas putida (strain ATCC 700007 / DSM 6899 / JCM 31910 / BCRC 17059 / LMG 24140 / F1) protein is Sulfate adenylyltransferase subunit 2.